The chain runs to 206 residues: MARYLGPKLKLTRREGTDLFLKSGVRAIDSKCKLEAAPGQHGARKARLSEYGVQLREKQKVRRTYGVLEKQFRNYYKDAARLKGNTGENLLTLLETRLDNVVYRMGFGATRAEARQLVSHKSIMVNGRVVNIPSFKVSANDVISVREKSQKQARIKAALEVASQREKPTWVEVDAAKMEGAFKRLPERSDLSADINEQLIVELYSK.

The 61-residue stretch at 96-156 (TRLDNVVYRM…EKSQKQARIK (61 aa)) folds into the S4 RNA-binding domain.

The protein belongs to the universal ribosomal protein uS4 family. Part of the 30S ribosomal subunit. Contacts protein S5. The interaction surface between S4 and S5 is involved in control of translational fidelity.

One of the primary rRNA binding proteins, it binds directly to 16S rRNA where it nucleates assembly of the body of the 30S subunit. In terms of biological role, with S5 and S12 plays an important role in translational accuracy. The sequence is that of Small ribosomal subunit protein uS4 from Shewanella loihica (strain ATCC BAA-1088 / PV-4).